A 50-amino-acid chain; its full sequence is Cytochrome c-555 (50 aa).

Positions 7, 10, 11, and 25 each coordinate heme.

Post-translationally, binds 1 heme group per subunit.

Its subcellular location is the cell membrane. In Schinkia azotoformans (Bacillus azotoformans), this protein is Cytochrome c-555.